A 466-amino-acid polypeptide reads, in one-letter code: CCA-adding enzyme (466 aa).

ATP contacts are provided by S55 and R58. The CTP site is built by S55 and R58. Residues D67, D69, and D118 each coordinate Mg(2+). ATP-binding residues include H141, K161, and Y170. Residues H141, K161, and Y170 each contribute to the CTP site.

This sequence belongs to the tRNA nucleotidyltransferase/poly(A) polymerase family. Archaeal CCA-adding enzyme subfamily. In terms of assembly, homodimer. It depends on Mg(2+) as a cofactor.

It catalyses the reaction a tRNA precursor + 2 CTP + ATP = a tRNA with a 3' CCA end + 3 diphosphate. The enzyme catalyses a tRNA with a 3' CCA end + 2 CTP + ATP = a tRNA with a 3' CCACCA end + 3 diphosphate. Its function is as follows. Catalyzes the addition and repair of the essential 3'-terminal CCA sequence in tRNAs without using a nucleic acid template. Adds these three nucleotides in the order of C, C, and A to the tRNA nucleotide-73, using CTP and ATP as substrates and producing inorganic pyrophosphate. tRNA 3'-terminal CCA addition is required both for tRNA processing and repair. Also involved in tRNA surveillance by mediating tandem CCA addition to generate a CCACCA at the 3' terminus of unstable tRNAs. While stable tRNAs receive only 3'-terminal CCA, unstable tRNAs are marked with CCACCA and rapidly degraded. This is CCA-adding enzyme from Haloarcula marismortui (strain ATCC 43049 / DSM 3752 / JCM 8966 / VKM B-1809) (Halobacterium marismortui).